The chain runs to 454 residues: tRNA modification GTPase MnmE (454 aa).

3 residues coordinate (6S)-5-formyl-5,6,7,8-tetrahydrofolate: Arg-23, Glu-80, and Lys-120. The region spanning 216–377 is the TrmE-type G domain; the sequence is GMKVVIAGRP…LRSHLKEAMG (162 aa). Asn-226 provides a ligand contact to K(+). Residues 226 to 231, 245 to 251, 270 to 273, and 358 to 360 each bind GTP; these read NAGKSS, TDIAGTT, DTAG, and SAR. Ser-230 is a Mg(2+) binding site. The K(+) site is built by Thr-245, Ile-247, and Thr-250. Thr-251 serves as a coordination point for Mg(2+). Lys-454 serves as a coordination point for (6S)-5-formyl-5,6,7,8-tetrahydrofolate.

Belongs to the TRAFAC class TrmE-Era-EngA-EngB-Septin-like GTPase superfamily. TrmE GTPase family. Homodimer. Heterotetramer of two MnmE and two MnmG subunits. It depends on K(+) as a cofactor.

It localises to the cytoplasm. In terms of biological role, exhibits a very high intrinsic GTPase hydrolysis rate. Involved in the addition of a carboxymethylaminomethyl (cmnm) group at the wobble position (U34) of certain tRNAs, forming tRNA-cmnm(5)s(2)U34. The sequence is that of tRNA modification GTPase MnmE from Proteus mirabilis (strain HI4320).